An 880-amino-acid polypeptide reads, in one-letter code: Translation initiation factor IF-2 (880 aa).

Positions 143–228 are enriched in basic and acidic residues; it reads EAEAKAKAKA…EAERNGDHHI (86 aa). The disordered stretch occupies residues 143 to 289; the sequence is EAEAKAKAKA…APESMAHGFN (147 aa). The segment covering 249 to 262 has biased composition (basic residues); sequence GRRARNKSNAKKRG. One can recognise a tr-type G domain in the interval 380 to 549; the sequence is SRAPVVTIMG…LLQAEVLELK (170 aa). Residues 389–396 are G1; that stretch reads GHVDHGKT. 389-396 serves as a coordination point for GTP; it reads GHVDHGKT. Residues 414–418 are G2; it reads GITQH. The interval 435-438 is G3; that stretch reads DTPG. GTP is bound by residues 435–439 and 489–492; these read DTPGH and NKMD. Positions 489–492 are G4; the sequence is NKMD. The segment at 525–527 is G5; that stretch reads SAK.

Belongs to the TRAFAC class translation factor GTPase superfamily. Classic translation factor GTPase family. IF-2 subfamily.

It localises to the cytoplasm. Functionally, one of the essential components for the initiation of protein synthesis. Protects formylmethionyl-tRNA from spontaneous hydrolysis and promotes its binding to the 30S ribosomal subunits. Also involved in the hydrolysis of GTP during the formation of the 70S ribosomal complex. The sequence is that of Translation initiation factor IF-2 from Shewanella putrefaciens (strain CN-32 / ATCC BAA-453).